Consider the following 342-residue polypeptide: Glucokinase (342 aa).

15-20 (GDVGGT) is a binding site for ATP.

The protein belongs to the bacterial glucokinase family.

The protein localises to the cytoplasm. The catalysed reaction is D-glucose + ATP = D-glucose 6-phosphate + ADP + H(+). In Ralstonia nicotianae (strain ATCC BAA-1114 / GMI1000) (Ralstonia solanacearum), this protein is Glucokinase.